A 26-amino-acid polypeptide reads, in one-letter code: Mucus envelope protein (26 aa).

Glycosylated. Produced by the opercular gland in the gill cavity and secreted as part of the mucus cocoon.

It localises to the secreted. In terms of biological role, exhibits antibacterial activity. May play a role in protection against parasite settlement. The protein is Mucus envelope protein of Scarus vetula (Queen parrotfish).